A 300-amino-acid chain; its full sequence is Iodotyrosine deiodinase (300 aa).

A helical membrane pass occupies residues 15–31 (VGLISVSIAAGVALGQL). FMN is bound by residues 110–114 (RRSVR), S138, and 138–139 (SG). 3,5-diiodo-L-tyrosine contacts are provided by A140, E167, Y171, and K192. The 3-iodo-L-tyrosine site is built by A140, E167, Y171, and K192. Residues 247–249 (TTT) and R289 contribute to the FMN site.

The protein belongs to the nitroreductase family. FMN serves as cofactor. In terms of processing, may be cleaved at Gln-55. The cleaved form retains catalytic activity.

It is found in the membrane. It carries out the reaction 2 iodide + L-tyrosine + 2 NADP(+) = 3,5-diiodo-L-tyrosine + 2 NADPH + H(+). It catalyses the reaction iodide + L-tyrosine + NADP(+) = 3-iodo-L-tyrosine + NADPH. The catalysed reaction is 3-iodo-L-tyrosine + iodide + NADP(+) = 3,5-diiodo-L-tyrosine + NADPH + H(+). The enzyme catalyses L-tyrosine + chloride + NADP(+) = 3-chloro-L-tyrosine + NADPH. It carries out the reaction bromide + L-tyrosine + NADP(+) = 3-bromo-L-tyrosine + NADPH. Its function is as follows. Catalyzes the dehalogenation of halotyrosines such as 3,5-diiodo-L-tyrosine. Likely to also catalyze the dehalogenation of other halotyrosines such as 3-bromo-L-tyrosine, 3-chloro-L-tyrosine and 3-iodo-L-tyrosine. The protein is Iodotyrosine deiodinase of Daphnia pulex (Water flea).